The primary structure comprises 388 residues: Protein YnjB (388 aa).

Residues 333–357 (AVWGDPSVLDPQKLPDGQRESLQSR) form a disordered region.

This Escherichia coli (strain K12) protein is Protein YnjB (ynjB).